A 201-amino-acid chain; its full sequence is Small ribosomal subunit protein uS4c (201 aa).

Positions 20–44 (GLTSKRPRAGSDLRNQSRSGKKSQY) are disordered. One can recognise an S4 RNA-binding domain in the interval 89-152 (MRLDNILFRL…NSRTLVQNLL (64 aa)).

Belongs to the universal ribosomal protein uS4 family. Part of the 30S ribosomal subunit. Contacts protein S5. The interaction surface between S4 and S5 is involved in control of translational fidelity.

The protein localises to the plastid. It localises to the chloroplast. Its function is as follows. One of the primary rRNA binding proteins, it binds directly to 16S rRNA where it nucleates assembly of the body of the 30S subunit. Functionally, with S5 and S12 plays an important role in translational accuracy. The polypeptide is Small ribosomal subunit protein uS4c (rps4) (Aethionema cordifolium (Lebanon stonecress)).